The following is a 294-amino-acid chain: Elongation factor Ts (294 aa).

The interval 79 to 82 is involved in Mg(2+) ion dislocation from EF-Tu; it reads TDFV.

This sequence belongs to the EF-Ts family.

The protein resides in the cytoplasm. Associates with the EF-Tu.GDP complex and induces the exchange of GDP to GTP. It remains bound to the aminoacyl-tRNA.EF-Tu.GTP complex up to the GTP hydrolysis stage on the ribosome. The chain is Elongation factor Ts from Geobacillus sp. (strain WCH70).